Reading from the N-terminus, the 447-residue chain is Argininosuccinate synthase (447 aa).

ATP is bound by residues 17–25 (AFSGGLDTS) and Ala43. Position 99 (Tyr99) interacts with L-citrulline. ATP-binding residues include Gly129 and Thr131. 3 residues coordinate L-aspartate: Thr131, Asn135, and Asp136. Residue Asn135 coordinates L-citrulline. Asp136 provides a ligand contact to ATP. L-citrulline-binding residues include Arg139 and Ser192. Asp194 provides a ligand contact to ATP. Positions 201, 203, and 280 each coordinate L-citrulline.

Belongs to the argininosuccinate synthase family. Type 2 subfamily. As to quaternary structure, homotetramer.

The protein localises to the cytoplasm. It catalyses the reaction L-citrulline + L-aspartate + ATP = 2-(N(omega)-L-arginino)succinate + AMP + diphosphate + H(+). It participates in amino-acid biosynthesis; L-arginine biosynthesis; L-arginine from L-ornithine and carbamoyl phosphate: step 2/3. The polypeptide is Argininosuccinate synthase (Salmonella heidelberg (strain SL476)).